Consider the following 404-residue polypeptide: MQNKKSHYIWLFLVIFVPALILYFNKVKLGLDLRGGTSVVLQAQGKIEADTMSKVRNIIERRVNSIGVAEPVIQLSGNDKLIVELAGIKDPQKAIELIGTTAKLEFRIKNKDGSYGPVLLEGSALKSAGVSRDQVGMPSVSFELNSQGANTFAKITRENIGKQLAIMLDNKEQSAPTINSEINGGSGIITGRFSMEEANNLANLLKSGALPVEIKIVENRTVGATLGVDSIKQTGIAGLIALGVISVFMIAIYKIPGIVADIALLINGVLVLGLLSGIGAALTLPGIAGFILTLGMAVDSNVITYERIKEELRLGESLHDAVERGYENAFPAIIDGNITTLLVAAVLFFLGTGPIKGFAVTLSLGVVATIITGVFVSKVILKLFIKTFNIKREQLFWKGALNED.

6 helical membrane passes run 7–27 (HYIW…FNKV), 239–259 (LIAL…PGIV), 262–282 (IALL…GAAL), 283–303 (TLPG…SNVI), 330–350 (FPAI…LFFL), and 357–377 (GFAV…VFVS).

Belongs to the SecD/SecF family. SecD subfamily. As to quaternary structure, forms a complex with SecF. Part of the essential Sec protein translocation apparatus which comprises SecA, SecYEG and auxiliary proteins SecDF. Other proteins may also be involved.

The protein resides in the cell inner membrane. In terms of biological role, part of the Sec protein translocase complex. Interacts with the SecYEG preprotein conducting channel. SecDF uses the proton motive force (PMF) to complete protein translocation after the ATP-dependent function of SecA. The sequence is that of Protein translocase subunit SecD from Leptotrichia buccalis (strain ATCC 14201 / DSM 1135 / JCM 12969 / NCTC 10249 / C-1013-b).